The chain runs to 267 residues: Ribosomal RNA small subunit methyltransferase A (267 aa).

6 residues coordinate S-adenosyl-L-methionine: Asn13, Leu15, Gly39, Glu59, Asp87, and Asn106.

The protein belongs to the class I-like SAM-binding methyltransferase superfamily. rRNA adenine N(6)-methyltransferase family. RsmA subfamily.

Its subcellular location is the cytoplasm. The enzyme catalyses adenosine(1518)/adenosine(1519) in 16S rRNA + 4 S-adenosyl-L-methionine = N(6)-dimethyladenosine(1518)/N(6)-dimethyladenosine(1519) in 16S rRNA + 4 S-adenosyl-L-homocysteine + 4 H(+). In terms of biological role, specifically dimethylates two adjacent adenosines (A1518 and A1519) in the loop of a conserved hairpin near the 3'-end of 16S rRNA in the 30S particle. May play a critical role in biogenesis of 30S subunits. This chain is Ribosomal RNA small subunit methyltransferase A, found in Sulfurimonas denitrificans (strain ATCC 33889 / DSM 1251) (Thiomicrospira denitrificans (strain ATCC 33889 / DSM 1251)).